The primary structure comprises 473 residues: Ribulose bisphosphate carboxylase large chain (473 aa).

Residues 1–2 constitute a propeptide that is removed on maturation; sequence MS. The residue at position 3 (P3) is an N-acetylproline. K14 is modified (N6,N6,N6-trimethyllysine). Residues N123 and T173 each contribute to the substrate site. Residue K175 is the Proton acceptor of the active site. A substrate-binding site is contributed by K177. 3 residues coordinate Mg(2+): K201, D203, and E204. Position 201 is an N6-carboxylysine (K201). The active-site Proton acceptor is the H294. Residues R295, H327, and S379 each contribute to the substrate site.

Belongs to the RuBisCO large chain family. Type I subfamily. Heterohexadecamer of 8 large chains and 8 small chains; disulfide-linked. The disulfide link is formed within the large subunit homodimers. The cofactor is Mg(2+). In terms of processing, the disulfide bond which can form in the large chain dimeric partners within the hexadecamer appears to be associated with oxidative stress and protein turnover.

It is found in the plastid. The protein localises to the chloroplast. It catalyses the reaction 2 (2R)-3-phosphoglycerate + 2 H(+) = D-ribulose 1,5-bisphosphate + CO2 + H2O. It carries out the reaction D-ribulose 1,5-bisphosphate + O2 = 2-phosphoglycolate + (2R)-3-phosphoglycerate + 2 H(+). In terms of biological role, ruBisCO catalyzes two reactions: the carboxylation of D-ribulose 1,5-bisphosphate, the primary event in carbon dioxide fixation, as well as the oxidative fragmentation of the pentose substrate in the photorespiration process. Both reactions occur simultaneously and in competition at the same active site. In Sesbania sesban (Egyptian riverhemp), this protein is Ribulose bisphosphate carboxylase large chain.